The following is a 275-amino-acid chain: Tryptophan synthase alpha chain (275 aa).

The Proton acceptor role is filled by Glu51.

This sequence belongs to the TrpA family. As to quaternary structure, tetramer of two alpha and two beta chains.

It carries out the reaction (1S,2R)-1-C-(indol-3-yl)glycerol 3-phosphate + L-serine = D-glyceraldehyde 3-phosphate + L-tryptophan + H2O. It functions in the pathway amino-acid biosynthesis; L-tryptophan biosynthesis; L-tryptophan from chorismate: step 5/5. Functionally, the alpha subunit is responsible for the aldol cleavage of indoleglycerol phosphate to indole and glyceraldehyde 3-phosphate. This is Tryptophan synthase alpha chain from Caulobacter vibrioides (strain ATCC 19089 / CIP 103742 / CB 15) (Caulobacter crescentus).